Consider the following 329-residue polypeptide: GMP reductase (329 aa).

The Thioimidate intermediate role is filled by cysteine 178. 207-230 (IIADGGIRNNGDIAKSIRFGATMC) serves as a coordination point for NADP(+).

Belongs to the IMPDH/GMPR family. GuaC type 2 subfamily.

The enzyme catalyses IMP + NH4(+) + NADP(+) = GMP + NADPH + 2 H(+). In terms of biological role, catalyzes the irreversible NADPH-dependent deamination of GMP to IMP. It functions in the conversion of nucleobase, nucleoside and nucleotide derivatives of G to A nucleotides, and in maintaining the intracellular balance of A and G nucleotides. The protein is GMP reductase of Lacticaseibacillus paracasei (strain ATCC 334 / BCRC 17002 / CCUG 31169 / CIP 107868 / KCTC 3260 / NRRL B-441) (Lactobacillus paracasei).